The sequence spans 944 residues: MSDYKSTLNLPETGFPMRGDLAKREPGMLARWTDDDLYGIIRAAKKGKKTFILHDGPPYANGSIHIGHSVNKILKDIIVKSKGLSGFDSPYVPGWDCHGLPIELKVEQEFGKPGEKFTAAEFRAKCREYAATQVDGQRKDFIRLGVLGDWSHPYLTMDFKTEANIIRALGRIIKNGHLHKGAKPVHWCVDCRSALAEAEVEYYDKTSPSIDVAFRAVDQDAVKAKFGLPGVSGPVSLVIWTTTPWTLPANRAISLAPDFDYALVQIDGQAVILAKDLVESVMQRIGAAEYTILGTVKGAELELLRFTHPFMGFDVPAILGDHVTLDAGTGAVHTAPGHGPDDYVIGQKYGLETANPVGPDGTYLPGTYPTLDGVNVFKANDIVIELLKEKGALLHVEKMQHSYPCCWRHKTPIIFRATPQWFVSMDKEGLRQQSLKEIKGVQWIPDWGQARIESMVANRPDWCISRQRTWGVPMSLFVHKETQELLPIERTLAAMEEVAKRVEVDGIQAWWDLDPKEILGEDADQYEKVPDTLDVWFDSGSTSYSVVDARPEFAGHAADMYLEGSDQHRGWFMSSLMISVAMKGKAPYRQVLTHGFTVDGQGRKMSKSIGNTVSPQDVMNKLGADILRLWVASTDYTGEMAVSDEILKRAADSYRRIRNTARFLLANLNGFNPATDMVKPEEMVVLDRWAVGCAKTAQQEILKAYEAYDFHEVVQRLMRFCSVEMGSFYLDIIKDRQYTAKADSVARRSCQTALYHIAEALVRWMAPIMSFTADEIWGYLPGEREKYVFTGEWYDGLFGLEENEEFNDAFWDDVRYIKDQVNKELENQKANGIKSNLEAKVTLKYADDANGTIKKLKLLGEEVRFIFITSQFVISEQAGGIDDENIQYNAGNTTVQAVVTRAEGDKCPRCWHYTTDVGKVAEHADICGRCVSNIAGNGEQRKFA.

The 'HIGH' region motif lies at 58–68 (PYANGSIHIGH). E563 contacts L-isoleucyl-5'-AMP. The 'KMSKS' region motif lies at 604-608 (KMSKS). An ATP-binding site is contributed by K607. Residues C907, C910, C927, and C930 each contribute to the Zn(2+) site.

It belongs to the class-I aminoacyl-tRNA synthetase family. IleS type 1 subfamily. As to quaternary structure, monomer. The cofactor is Zn(2+).

The protein resides in the cytoplasm. The catalysed reaction is tRNA(Ile) + L-isoleucine + ATP = L-isoleucyl-tRNA(Ile) + AMP + diphosphate. Its function is as follows. Catalyzes the attachment of isoleucine to tRNA(Ile). As IleRS can inadvertently accommodate and process structurally similar amino acids such as valine, to avoid such errors it has two additional distinct tRNA(Ile)-dependent editing activities. One activity is designated as 'pretransfer' editing and involves the hydrolysis of activated Val-AMP. The other activity is designated 'posttransfer' editing and involves deacylation of mischarged Val-tRNA(Ile). This chain is Isoleucine--tRNA ligase, found in Salmonella typhimurium (strain LT2 / SGSC1412 / ATCC 700720).